A 508-amino-acid chain; its full sequence is MIDHLKRTKIIATCGPALTKSLVSLKMLDDNEYAAIKKVAYANIEAIIKSGVSVIRLNFSHGTHEEQQVRIKIVRDVAKAMNIPVSIMLDTNGPEIRIVETKKEGLKITKDSEVIINTMSKMIASDNQFAVSDASGKYNMVNDVNIGQKILVDDGKLTLVVTRVDKQHNQVICVAKNDHTVFTKKRLNLPNAQYSIPFLSEKDLKDIDFGLSQGIDYIAASFVNTVADIKQLRDYLKLKNASGVKIIAKIESNHALNNIDKIIKASDGIMVARGDLGLEIPYYQVPYWQRYMIKACRFFNKRSITATQMLDSLEKNIQPTRAEVTDVYFAVDRGNDATMLSGETASGLYPLNAVAVMQKIDKQSETFFDYQYNVNYYLKNSTANKSRFWHNVVLPLTKKTVPKRKLVNSAFKYDFIVYPTNNINRIYALSNARLAAAVIILTNNKRVYTGHGVDYGIFCYLIDKNPNQLTKAELIELAWKAINHYQAYGDLEKLKQCLAVYNETIINL.

Substrate is bound at residue Arg-56. Positions 58, 60, 90, and 91 each coordinate K(+). 58–61 (NFSH) provides a ligand contact to ATP. ATP contacts are provided by Arg-97 and Lys-185. Glu-251 is a Mg(2+) binding site. Residues Gly-274, Asp-275, and Thr-307 each coordinate substrate. Asp-275 lines the Mg(2+) pocket.

The protein belongs to the pyruvate kinase family. In terms of assembly, homotetramer. The cofactor is Mg(2+). Requires K(+) as cofactor.

It carries out the reaction pyruvate + ATP = phosphoenolpyruvate + ADP + H(+). The protein operates within carbohydrate degradation; glycolysis; pyruvate from D-glyceraldehyde 3-phosphate: step 5/5. Its activity is regulated as follows. Regulated by phosphoenolpyruvate substrate and is allosterically activated by ribose-5-phosphate, AMP and other nucleoside monophosphates but not by fructose-1,6-bisphosphate. The polypeptide is Pyruvate kinase (pyk) (Mycoplasma genitalium (strain ATCC 33530 / DSM 19775 / NCTC 10195 / G37) (Mycoplasmoides genitalium)).